The primary structure comprises 244 residues: Glucosamine-6-phosphate deaminase (244 aa).

Residue D67 is the Proton acceptor; for enolization step of the active site. The active-site For ring-opening step is the N136. H138 serves as the catalytic Proton acceptor; for ring-opening step. The For ring-opening step role is filled by E143.

Belongs to the glucosamine/galactosamine-6-phosphate isomerase family. NagB subfamily.

It carries out the reaction alpha-D-glucosamine 6-phosphate + H2O = beta-D-fructose 6-phosphate + NH4(+). The protein operates within amino-sugar metabolism; N-acetylneuraminate degradation; D-fructose 6-phosphate from N-acetylneuraminate: step 5/5. Catalyzes the reversible isomerization-deamination of glucosamine 6-phosphate (GlcN6P) to form fructose 6-phosphate (Fru6P) and ammonium ion. This Clostridium botulinum (strain Loch Maree / Type A3) protein is Glucosamine-6-phosphate deaminase.